Consider the following 207-residue polypeptide: Large ribosomal subunit protein uL4 (207 aa).

It belongs to the universal ribosomal protein uL4 family. As to quaternary structure, part of the 50S ribosomal subunit.

Its function is as follows. One of the primary rRNA binding proteins, this protein initially binds near the 5'-end of the 23S rRNA. It is important during the early stages of 50S assembly. It makes multiple contacts with different domains of the 23S rRNA in the assembled 50S subunit and ribosome. In terms of biological role, forms part of the polypeptide exit tunnel. This Rickettsia peacockii (strain Rustic) protein is Large ribosomal subunit protein uL4.